The sequence spans 230 residues: 6-carboxyhexanoate--CoA ligase (230 aa).

It belongs to the BioW family. As to quaternary structure, homodimer. It depends on Mg(2+) as a cofactor.

The catalysed reaction is heptanedioate + ATP + CoA = 6-carboxyhexanoyl-CoA + AMP + diphosphate. It participates in metabolic intermediate metabolism; pimeloyl-CoA biosynthesis; pimeloyl-CoA from pimelate: step 1/1. Catalyzes the transformation of pimelate into pimeloyl-CoA with concomitant hydrolysis of ATP to AMP. The protein is 6-carboxyhexanoate--CoA ligase of Staphylococcus aureus (strain MRSA252).